We begin with the raw amino-acid sequence, 133 residues long: 14 kDa fatty acid-binding protein (133 aa).

Residues Arg107 and 127–129 (RNY) each bind (5Z,8Z,11Z,14Z)-eicosatetraenoate. (9Z)-octadecenoate is bound by residues Arg107 and 127 to 129 (RNY).

The protein belongs to the calycin superfamily. Fatty-acid binding protein (FABP) family. As to expression, tubercles, muscle layers and body.

Its subcellular location is the cytoplasm. Functionally, may play a role in the transport of fatty acids. Binds various fatty acids, such as arachidonic, oleic, palmitic and linolenic acid (in vitro). This Schistosoma mansoni (Blood fluke) protein is 14 kDa fatty acid-binding protein.